Consider the following 61-residue polypeptide: Small ribosomal subunit protein uS14 (61 aa).

C24, C27, C40, and C43 together coordinate Zn(2+).

It belongs to the universal ribosomal protein uS14 family. Zinc-binding uS14 subfamily. In terms of assembly, part of the 30S ribosomal subunit. Contacts proteins S3 and S10. Zn(2+) serves as cofactor.

Binds 16S rRNA, required for the assembly of 30S particles and may also be responsible for determining the conformation of the 16S rRNA at the A site. The chain is Small ribosomal subunit protein uS14 from Moorella thermoacetica (strain ATCC 39073 / JCM 9320).